The following is an 87-amino-acid chain: UPF0250 protein plu1293 (87 aa).

Belongs to the UPF0250 family.

The sequence is that of UPF0250 protein plu1293 from Photorhabdus laumondii subsp. laumondii (strain DSM 15139 / CIP 105565 / TT01) (Photorhabdus luminescens subsp. laumondii).